The sequence spans 476 residues: Glycogen synthase (476 aa).

Position 15 (K15) interacts with ADP-alpha-D-glucose.

The protein belongs to the glycosyltransferase 1 family. Bacterial/plant glycogen synthase subfamily.

The enzyme catalyses [(1-&gt;4)-alpha-D-glucosyl](n) + ADP-alpha-D-glucose = [(1-&gt;4)-alpha-D-glucosyl](n+1) + ADP + H(+). It participates in glycan biosynthesis; glycogen biosynthesis. Synthesizes alpha-1,4-glucan chains using ADP-glucose. This is Glycogen synthase from Bacillus cereus (strain B4264).